Here is a 452-residue protein sequence, read N- to C-terminus: Ribosomal protein uS12 methylthiotransferase RimO (452 aa).

Positions 3 to 118 (GKIGFVSLGC…VMQAIHLHLP (116 aa)) constitute an MTTase N-terminal domain. The [4Fe-4S] cluster site is built by Cys12, Cys48, Cys77, Cys149, Cys153, and Cys156. One can recognise a Radical SAM core domain in the interval 135-381 (LTPKHYAYLK…MAKAEDISIK (247 aa)). The 69-residue stretch at 384–452 (AKKIGKRVQV…SQGHDLIAET (69 aa)) folds into the TRAM domain.

It belongs to the methylthiotransferase family. RimO subfamily. [4Fe-4S] cluster is required as a cofactor.

Its subcellular location is the cytoplasm. The catalysed reaction is L-aspartate(89)-[ribosomal protein uS12]-hydrogen + (sulfur carrier)-SH + AH2 + 2 S-adenosyl-L-methionine = 3-methylsulfanyl-L-aspartate(89)-[ribosomal protein uS12]-hydrogen + (sulfur carrier)-H + 5'-deoxyadenosine + L-methionine + A + S-adenosyl-L-homocysteine + 2 H(+). Its function is as follows. Catalyzes the methylthiolation of an aspartic acid residue of ribosomal protein uS12. This chain is Ribosomal protein uS12 methylthiotransferase RimO, found in Polynucleobacter asymbioticus (strain DSM 18221 / CIP 109841 / QLW-P1DMWA-1) (Polynucleobacter necessarius subsp. asymbioticus).